The sequence spans 187 residues: Elongation factor P (187 aa).

This sequence belongs to the elongation factor P family.

The protein localises to the cytoplasm. It functions in the pathway protein biosynthesis; polypeptide chain elongation. Functionally, involved in peptide bond synthesis. Stimulates efficient translation and peptide-bond synthesis on native or reconstituted 70S ribosomes in vitro. Probably functions indirectly by altering the affinity of the ribosome for aminoacyl-tRNA, thus increasing their reactivity as acceptors for peptidyl transferase. The sequence is that of Elongation factor P from Mycobacterium sp. (strain JLS).